Consider the following 133-residue polypeptide: MNHTVQTFFSPVNSGQPPNYEMLKEEHEVAVLGAPHNPAPPTSTVIHIRSETSVPDHVVWSLFNTLFMNPCCLGFIAFAYSVKSRDRKMVGDVTGAQAYASTAKCLNIWALILGILMTILLIVIPVLIFQAYG.

Over 1–57 (MNHTVQTFFSPVNSGQPPNYEMLKEEHEVAVLGAPHNPAPPTSTVIHIRSETSVPDH) the chain is Cytoplasmic. Position 20 is a phosphotyrosine (Tyr-20). Lys-24 is covalently cross-linked (Glycyl lysine isopeptide (Lys-Gly) (interchain with G-Cter in ubiquitin)). Positions 58-78 (VVWSLFNTLFMNPCCLGFIAF) form an intramembrane region, helical. Residues 60-93 (WSLFNTLFMNPCCLGFIAFAYSVKSRDRKMVGDV) are interaction with SPP1. 2 S-palmitoyl cysteine lipidation sites follow: Cys-71 and Cys-72. The Cytoplasmic portion of the chain corresponds to 79 to 107 (AYSVKSRDRKMVGDVTGAQAYASTAKCLN). Residues Lys-83, Lys-88, and Lys-104 each participate in a glycyl lysine isopeptide (Lys-Gly) (interchain with G-Cter in ubiquitin) cross-link. Cys-105 carries S-palmitoyl cysteine lipidation. A helical transmembrane segment spans residues 108–128 (IWALILGILMTILLIVIPVLI). The segment at 108–133 (IWALILGILMTILLIVIPVLIFQAYG) is interaction with VAPA. Topologically, residues 129–133 (FQAYG) are extracellular.

Belongs to the CD225/Dispanin family. As to quaternary structure, interacts with ATP6V0B. Interacts with CD81. Interacts with SPP1; the interaction reduces OPN expression. Interacts with VAPA. Interacts with BRI3 (isoforms 1 and 2); the interaction with isoform 2 is weaker than with isoform 1. Palmitoylation on membrane-proximal cysteines controls clustering in membrane compartments and antiviral activity against influenza virus and hepatitis C virus (HCV). Has no effect on anti-SARS-CoV-2 activity. In terms of processing, not glycosylated. Post-translationally, polyubiquitinated with both 'Lys-48' and 'Lys-63' linkages. Ubiquitination negatively regulates antiviral activity. Lys-24 is the most prevalent ubiquitination site. Phosphorylation at Tyr-20 is required for endosomal and lysosomal location.

It localises to the cell membrane. It is found in the late endosome membrane. The protein localises to the early endosome membrane. Its subcellular location is the lysosome membrane. The protein resides in the cytoplasm. It localises to the perinuclear region. Functionally, IFN-induced antiviral protein which disrupts intracellular cholesterol homeostasis. Inhibits the entry of viruses to the host cell cytoplasm by preventing viral fusion with cholesterol depleted endosomes. May inactivate new enveloped viruses which buds out of the infected cell, by letting them go out with a cholesterol depleted membrane. Active against multiple viruses, including influenza A virus, SARS coronaviruses (SARS-CoV and SARS-CoV-2), Marburg virus (MARV), Ebola virus (EBOV), Dengue virus (DNV), West Nile virus (WNV), human immunodeficiency virus type 1 (HIV-1), hepatitis C virus (HCV) and vesicular stomatitis virus (VSV). Can inhibit: influenza virus hemagglutinin protein-mediated viral entry, MARV and EBOV GP1,2-mediated viral entry, SARS-CoV and SARS-CoV-2 S protein-mediated viral entry and VSV G protein-mediated viral entry. Plays a critical role in the structural stability and function of vacuolar ATPase (v-ATPase). Establishes physical contact with the v-ATPase of endosomes which is critical for proper clathrin localization and is also required for the function of the v-ATPase to lower the pH in phagocytic endosomes thus establishing an antiviral state. In hepatocytes, IFITM proteins act in a coordinated manner to restrict HCV infection by targeting the endocytosed HCV virion for lysosomal degradation. IFITM2 and IFITM3 display anti-HCV activity that may complement the anti-HCV activity of IFITM1 by inhibiting the late stages of HCV entry, possibly in a coordinated manner by trapping the virion in the endosomal pathway and targeting it for degradation at the lysosome. Exerts opposing activities on SARS-CoV-2, including amphipathicity-dependent restriction of virus at endosomes and amphipathicity-independent enhancement of infection at the plasma membrane. The polypeptide is Interferon-induced transmembrane protein 3 (Homo sapiens (Human)).